Reading from the N-terminus, the 156-residue chain is MPRKGYIGKRDVLPDPMYNSKVLTKLINSLMYDGKKGLAQKICYDAFDVIQNKTGKEPMEVFEEAMNNVMPLLEVKARRIGGATYQVPLEVRPERRQTLGIRWILIAARKRGEKYMSERLAGELMDAANNLGAAVKKREETHKMAEANKAFAHYRY.

It belongs to the universal ribosomal protein uS7 family. In terms of assembly, part of the 30S ribosomal subunit. Contacts proteins S9 and S11.

One of the primary rRNA binding proteins, it binds directly to 16S rRNA where it nucleates assembly of the head domain of the 30S subunit. Is located at the subunit interface close to the decoding center, probably blocks exit of the E-site tRNA. In Clostridium tetani (strain Massachusetts / E88), this protein is Small ribosomal subunit protein uS7.